The chain runs to 348 residues: Lysophosphatidic acid receptor 2 (348 aa).

Residues 1 to 30 lie on the Extracellular side of the membrane; sequence MGHCYYNETIGFFYNNSGKELSSHWRPKDV. Residues Asn7 and Asn15 are each glycosylated (N-linked (GlcNAc...) asparagine). The helical transmembrane segment at 31–51 threads the bilayer; that stretch reads VVVALGLTVSVLVLLTNLLVI. Over 52 to 66 the chain is Cytoplasmic; that stretch reads AAIASNRRFHQPIYY. The helical transmembrane segment at 67 to 87 threads the bilayer; it reads LLGNLAAADLFAGVAYLFLMF. The Extracellular portion of the chain corresponds to 88–104; it reads HTGPRTARLSLEGWFLR. The helical transmembrane segment at 105–124 threads the bilayer; the sequence is QGLLDTSLTASVATLLAIAV. The Cytoplasmic segment spans residues 125-143; that stretch reads ERRRSVMAVQLHSRLPRGR. Residues 144–164 traverse the membrane as a helical segment; that stretch reads VVMLIVGVWVAALGLGLLPAH. At 165–185 the chain is on the extracellular side; that stretch reads SWHCLCALDRCSRMAPLLSRS. The chain crosses the membrane as a helical span at residues 186 to 206; the sequence is YLAVWALSSLLVFLLMVAVYT. Residues 207–239 lie on the Cytoplasmic side of the membrane; that stretch reads RIFFYVRRRVQRMAEHVSCHPRYRETTLSLVKT. Residues 240–260 form a helical membrane-spanning segment; it reads VVIILGAFVVCWTPGQVVLLL. Over 261 to 276 the chain is Extracellular; the sequence is DGLGCKSCNVLAVEKY. The helical transmembrane segment at 277-294 threads the bilayer; sequence FLLLAEANSLVNAAVYSC. The Cytoplasmic segment spans residues 295 to 348; it reads RDAEMRRTFRRLLCCACLRRSTRESAHYTSSAQGGASTRIMLPENGHPLMDSTL. A lipid anchor (S-palmitoyl cysteine) is attached at Cys308. The short motif at 345–348 is the PDZ-binding element; that stretch reads DSTL.

This sequence belongs to the G-protein coupled receptor 1 family. Interacts with SLC9A3R2/NHERF2, MAGI3 and PLCB3. Interacts with RALA and GRK2.

Its subcellular location is the cell surface. It is found in the cell membrane. Its function is as follows. Receptor for lysophosphatidic acid (LPA), a mediator of diverse cellular activities. Seems to be coupled to the G(i)/G(o), G(12)/G(13), and G(q) families of heteromeric G proteins. Plays a key role in phospholipase C-beta (PLC-beta) signaling pathway. Stimulates phospholipase C (PLC) activity in a manner that is independent of RALA activation. This is Lysophosphatidic acid receptor 2 from Macaca fascicularis (Crab-eating macaque).